We begin with the raw amino-acid sequence, 908 residues long: Translation initiation factor IF-2 (908 aa).

Disordered regions lie at residues 122 to 180 (PVVE…VDDA) and 203 to 267 (EKAR…AVKK). Residues 132–143 (VAAEPEVVEAPE) are compositionally biased toward acidic residues. Low complexity predominate over residues 157-166 (EEPAAPAAPV). Over residues 223–248 (AKEDARPTKHVEDLAKLKKPHDKKDE) the composition is skewed to basic and acidic residues. Residues 256–267 (KHNKKAGKAVKK) show a composition bias toward basic residues. The region spanning 409–578 (PRAPIVTVMG…ALQAELLELS (170 aa)) is the tr-type G domain. A G1 region spans residues 418 to 425 (GHVDHGKT). 418-425 (GHVDHGKT) is a GTP binding site. The tract at residues 443-447 (GITQH) is G2. Residues 464 to 467 (DTPG) are G3. GTP is bound by residues 464–468 (DTPGH) and 518–521 (NKMD). A G4 region spans residues 518–521 (NKMD). Residues 554-556 (SAH) form a G5 region.

Belongs to the TRAFAC class translation factor GTPase superfamily. Classic translation factor GTPase family. IF-2 subfamily.

The protein resides in the cytoplasm. Functionally, one of the essential components for the initiation of protein synthesis. Protects formylmethionyl-tRNA from spontaneous hydrolysis and promotes its binding to the 30S ribosomal subunits. Also involved in the hydrolysis of GTP during the formation of the 70S ribosomal complex. The sequence is that of Translation initiation factor IF-2 from Saccharophagus degradans (strain 2-40 / ATCC 43961 / DSM 17024).